A 443-amino-acid polypeptide reads, in one-letter code: ATP-dependent protease ATPase subunit HslU (443 aa).

ATP-binding positions include Ile18, 60-65 (GVGKTE), Asp256, Glu321, and Arg393.

This sequence belongs to the ClpX chaperone family. HslU subfamily. As to quaternary structure, a double ring-shaped homohexamer of HslV is capped on each side by a ring-shaped HslU homohexamer. The assembly of the HslU/HslV complex is dependent on binding of ATP.

Its subcellular location is the cytoplasm. ATPase subunit of a proteasome-like degradation complex; this subunit has chaperone activity. The binding of ATP and its subsequent hydrolysis by HslU are essential for unfolding of protein substrates subsequently hydrolyzed by HslV. HslU recognizes the N-terminal part of its protein substrates and unfolds these before they are guided to HslV for hydrolysis. This is ATP-dependent protease ATPase subunit HslU from Pasteurella multocida (strain Pm70).